A 278-amino-acid polypeptide reads, in one-letter code: Malonyl-[acyl-carrier protein] O-methyltransferase (278 aa).

Belongs to the methyltransferase superfamily.

It catalyses the reaction malonyl-[ACP] + S-adenosyl-L-methionine = malonyl-[ACP] methyl ester + S-adenosyl-L-homocysteine. The protein operates within cofactor biosynthesis; biotin biosynthesis. Functionally, converts the free carboxyl group of a malonyl-thioester to its methyl ester by transfer of a methyl group from S-adenosyl-L-methionine (SAM). It allows to synthesize pimeloyl-ACP via the fatty acid synthetic pathway. The chain is Malonyl-[acyl-carrier protein] O-methyltransferase from Brevibacillus brevis (strain 47 / JCM 6285 / NBRC 100599).